A 156-amino-acid chain; its full sequence is Small ribosomal subunit protein uS7 (156 aa).

The protein belongs to the universal ribosomal protein uS7 family. In terms of assembly, part of the 30S ribosomal subunit. Contacts proteins S9 and S11.

Functionally, one of the primary rRNA binding proteins, it binds directly to 16S rRNA where it nucleates assembly of the head domain of the 30S subunit. Is located at the subunit interface close to the decoding center, probably blocks exit of the E-site tRNA. The sequence is that of Small ribosomal subunit protein uS7 from Pseudomonas entomophila (strain L48).